The chain runs to 183 residues: NADH-quinone oxidoreductase subunit A (183 aa).

Transmembrane regions (helical) follow at residues 11 to 31, 63 to 83, and 98 to 118; these read IIAF…VPLL, FYLV…LYAW, and MVIF…TGAL. Residues 160–183 are disordered; that stretch reads GHIPAQSSGRMKSKTSTAPSSKQE. The segment covering 164–183 has biased composition (polar residues); it reads AQSSGRMKSKTSTAPSSKQE.

The protein belongs to the complex I subunit 3 family. As to quaternary structure, NDH-1 is composed of 14 different subunits. Subunits NuoA, H, J, K, L, M, N constitute the membrane sector of the complex.

It localises to the cell inner membrane. The catalysed reaction is a quinone + NADH + 5 H(+)(in) = a quinol + NAD(+) + 4 H(+)(out). Its function is as follows. NDH-1 shuttles electrons from NADH, via FMN and iron-sulfur (Fe-S) centers, to quinones in the respiratory chain. The immediate electron acceptor for the enzyme in this species is believed to be ubiquinone. Couples the redox reaction to proton translocation (for every two electrons transferred, four hydrogen ions are translocated across the cytoplasmic membrane), and thus conserves the redox energy in a proton gradient. In Acinetobacter baylyi (strain ATCC 33305 / BD413 / ADP1), this protein is NADH-quinone oxidoreductase subunit A.